The following is a 734-amino-acid chain: MALRFPRFSQGLAQDPTTRRIWFGIATAHDFESHDDITEERLYQNIFASHFGQLAIIFLWTSGNLFHVAWQGNFESWVQDPLHVRPIAHAIWDPHFGQPAVEAFTRGGALGPVNIAYSGVYQWWYTIGLRTNEDLYTGALFLLFLSAISLIAGWLHLQPKWKPSVSWFKNAESRLNHHLSGLFGVSSLAWTGHLVHVAIPGSRGEYVRWNNFLDVLPYPQGLGPLFTGQWNLYAQNPDSSSHLFGTSQGAGTAILTLLGGFHPQTQSLWLTDIAHHHLAIAFVFLVAGHMYRTNFGIGHSMKDLLEAHIPPGGRLGRGHKGLYDTINNSIHFQLGLALASLGVITSLVAQHMYSLPAYAFIAQDFTTQAALYTHHQYIAGFIMTGAFAHGAIFFIRDYNPEQNEDNVLARMLDHKEAIKSHLSWASLFLGFHTLGLYVHNDVMLAFGTPEKQILIEPIFAQWIQSAHGKTSYGFDVLLSSTNGPAFNAGRSIWLPGWLNAINENGNSLFLTIGPGDFLVHHAIALGLHTTTLILVKGALDARGSKLMPDKKDFGYSFPCDGPGRGGTCDISAWDAFYLAVFWMLNTIGWVTFYWHWKHITLWQGNVSQFNESSTYLMGWLRDYLWLNSSQLINGYNPFGTNSLSVWAWMFLFGHLVWATGFMFLISWRGYWQELIETLAWAHERTPLANLIRWRDKPVALSIVQARLVGLAHFSVGYIFTYAAFLIASTSGKFG.

Helical transmembrane passes span 46–69 (IFASHFGQLAIIFLWTSGNLFHVA), 135–158 (LYTGALFLLFLSAISLIAGWLHLQ), 175–199 (LNHHLSGLFGVSSLAWTGHLVHVAI), 273–291 (IAHHHLAIAFVFLVAGHMY), 330–353 (IHFQLGLALASLGVITSLVAQHMY), 369–395 (AALYTHHQYIAGFIMTGAFAHGAIFFI), 417–439 (AIKSHLSWASLFLGFHTLGLYVH), and 517–535 (FLVHHAIALGLHTTTLILV). Residues cysteine 559 and cysteine 568 each contribute to the [4Fe-4S] cluster site. Transmembrane regions (helical) follow at residues 575-596 (AFYLAVFWMLNTIGWVTFYWHW) and 643-665 (LSVWAWMFLFGHLVWATGFMFLI). Chlorophyll a is bound by residues histidine 654, methionine 662, and tyrosine 670. Tryptophan 671 provides a ligand contact to phylloquinone. A helical membrane pass occupies residues 707–727 (LVGLAHFSVGYIFTYAAFLIA).

The protein belongs to the PsaA/PsaB family. As to quaternary structure, the PsaA/B heterodimer binds the P700 chlorophyll special pair and subsequent electron acceptors. PSI consists of a core antenna complex that captures photons, and an electron transfer chain that converts photonic excitation into a charge separation. The eukaryotic PSI reaction center is composed of at least 11 subunits. P700 is a chlorophyll a/chlorophyll a' dimer, A0 is one or more chlorophyll a, A1 is one or both phylloquinones and FX is a shared 4Fe-4S iron-sulfur center. is required as a cofactor.

It is found in the plastid. Its subcellular location is the chloroplast thylakoid membrane. It catalyses the reaction reduced [plastocyanin] + hnu + oxidized [2Fe-2S]-[ferredoxin] = oxidized [plastocyanin] + reduced [2Fe-2S]-[ferredoxin]. PsaA and PsaB bind P700, the primary electron donor of photosystem I (PSI), as well as the electron acceptors A0, A1 and FX. PSI is a plastocyanin-ferredoxin oxidoreductase, converting photonic excitation into a charge separation, which transfers an electron from the donor P700 chlorophyll pair to the spectroscopically characterized acceptors A0, A1, FX, FA and FB in turn. Oxidized P700 is reduced on the lumenal side of the thylakoid membrane by plastocyanin. This Illicium oligandrum (Star anise) protein is Photosystem I P700 chlorophyll a apoprotein A2.